The chain runs to 137 residues: MNNLIITTRQSPVRLLVDYVATTILWTLFALFIFLFAMDLLTGYYWQSEARSRLQFYFLLAVANAVVLIVWALYNKLRFQKQQHHAAYQYTPQEYAESLAIPDELYQQLQKSHRMSVHFTSQGQIKMVVSEKALVRA.

The Cytoplasmic segment spans residues 1–23 (MNNLIITTRQSPVRLLVDYVATT). The chain crosses the membrane as a helical span at residues 24–44 (ILWTLFALFIFLFAMDLLTGY). The Periplasmic segment spans residues 45 to 53 (YWQSEARSR). Residues 54-74 (LQFYFLLAVANAVVLIVWALY) traverse the membrane as a helical segment. Topologically, residues 75–137 (NKLRFQKQQH…VVSEKALVRA (63 aa)) are cytoplasmic.

The protein localises to the cell inner membrane. Its function is as follows. Required for the synthesis of poly-beta-1,6-N-acetyl-D-glucosamine (PGA), a biofilm adhesin polysaccharide. May assist the glycosyltransferase PgaC in the polymerization of PGA. The sequence is that of Biofilm PGA synthesis protein PgaD (pgaD) from Escherichia coli (strain K12).